The chain runs to 335 residues: Probable magnesium transporter NIPA1 (335 aa).

Topologically, residues 1-7 are extracellular; that stretch reads MDQMSPD. Residues 8–28 traverse the membrane as a helical segment; that stretch reads NINGVILAVSSSIFIGSSFII. The Cytoplasmic portion of the chain corresponds to 29–55; sequence KKKGLKKAGASGVRAGEGGYGYLKEPW. A helical membrane pass occupies residues 56–76; it reads WWAGMITMIVGEVANFAAYAF. The Extracellular segment spans residues 77–79; the sequence is APA. Residues 80–100 traverse the membrane as a helical segment; it reads ILVTPLGALSIIFSAVLAHFI. At 101 to 104 the chain is on the cytoplasmic side; sequence LKEK. Residues 105–125 form a helical membrane-spanning segment; the sequence is LHMFGILGCILCVVGSTTIVL. The Extracellular segment spans residues 126–143; that stretch reads HAPHEQKIESVKQIWQLA. The chain crosses the membrane as a helical span at residues 144-164; it reads IEPGFLVYSAVIVIVVAILIF. Topologically, residues 165–179 are cytoplasmic; that stretch reads YYEPRYGKTHMIVYV. Residues 180–200 form a helical membrane-spanning segment; that stretch reads GICSLMGSLTVMSVKAVAIAI. Residues 201 to 212 are Extracellular-facing; sequence KLTFSGTNQFKY. The helical transmembrane segment at 213–233 threads the bilayer; that stretch reads FNTWIFILVVATCCILQINYL. Residues 234 to 244 are Cytoplasmic-facing; it reads NKALDTFNTAV. Residues 245 to 265 traverse the membrane as a helical segment; that stretch reads ISPVYYVMFTTFTIIASMIMF. Topologically, residues 266–272 are extracellular; the sequence is KDWASQS. Residues 273 to 293 form a helical membrane-spanning segment; that stretch reads GLKIATELCGFVTILSGTFLL. The Cytoplasmic portion of the chain corresponds to 294–335; sequence HKTKDMGNSASGRGSISMPTRDTPVFTNSGSGRSSSSDKVAS. The segment covering 303 to 321 has biased composition (polar residues); it reads ASGRGSISMPTRDTPVFTN. Residues 303–335 are disordered; sequence ASGRGSISMPTRDTPVFTNSGSGRSSSSDKVAS. Residues 322–335 show a composition bias toward low complexity; sequence SGSGRSSSSDKVAS.

It belongs to the NIPA (TC 2.A.7) family. As to quaternary structure, homodimer.

It is found in the cell membrane. The protein localises to the early endosome. In terms of biological role, acts as a Mg(2+) transporter. Can also transport other divalent cations such as Fe(2+), Sr(2+), Ba(2+), Mn(2+) and Co(2+) but to a much less extent than Mg(2+). This chain is Probable magnesium transporter NIPA1, found in Arabidopsis thaliana (Mouse-ear cress).